The primary structure comprises 660 residues: Bifunctional polymyxin resistance protein ArnA (660 aa).

Residues M1–L304 are formyltransferase ArnAFT. The active-site Proton donor; for formyltransferase activity is H104. Residues R114 and V136 to D140 each bind (6R)-10-formyltetrahydrofolate. The interval R314–S660 is dehydrogenase ArnADH. Residues D347 and D368–I369 contribute to the NAD(+) site. UDP-alpha-D-glucuronate contacts are provided by residues A393, Y398, and T432–S433. The active-site Proton acceptor; for decarboxylase activity is the E434. UDP-alpha-D-glucuronate-binding positions include R460, N492, K526–R535, and Y613. R619 functions as the Proton donor; for decarboxylase activity in the catalytic mechanism.

This sequence in the N-terminal section; belongs to the Fmt family. UDP-L-Ara4N formyltransferase subfamily. The protein in the C-terminal section; belongs to the NAD(P)-dependent epimerase/dehydratase family. UDP-glucuronic acid decarboxylase subfamily. In terms of assembly, homohexamer, formed by a dimer of trimers.

The enzyme catalyses UDP-alpha-D-glucuronate + NAD(+) = UDP-beta-L-threo-pentopyranos-4-ulose + CO2 + NADH. The catalysed reaction is UDP-4-amino-4-deoxy-beta-L-arabinose + (6R)-10-formyltetrahydrofolate = UDP-4-deoxy-4-formamido-beta-L-arabinose + (6S)-5,6,7,8-tetrahydrofolate + H(+). The protein operates within nucleotide-sugar biosynthesis; UDP-4-deoxy-4-formamido-beta-L-arabinose biosynthesis; UDP-4-deoxy-4-formamido-beta-L-arabinose from UDP-alpha-D-glucuronate: step 1/3. It participates in nucleotide-sugar biosynthesis; UDP-4-deoxy-4-formamido-beta-L-arabinose biosynthesis; UDP-4-deoxy-4-formamido-beta-L-arabinose from UDP-alpha-D-glucuronate: step 3/3. Its pathway is bacterial outer membrane biogenesis; lipopolysaccharide biosynthesis. In terms of biological role, bifunctional enzyme that catalyzes the oxidative decarboxylation of UDP-glucuronic acid (UDP-GlcUA) to UDP-4-keto-arabinose (UDP-Ara4O) and the addition of a formyl group to UDP-4-amino-4-deoxy-L-arabinose (UDP-L-Ara4N) to form UDP-L-4-formamido-arabinose (UDP-L-Ara4FN). The modified arabinose is attached to lipid A and is required for resistance to polymyxin and cationic antimicrobial peptides. The sequence is that of Bifunctional polymyxin resistance protein ArnA from Escherichia fergusonii (strain ATCC 35469 / DSM 13698 / CCUG 18766 / IAM 14443 / JCM 21226 / LMG 7866 / NBRC 102419 / NCTC 12128 / CDC 0568-73).